A 691-amino-acid polypeptide reads, in one-letter code: DNA ligase (691 aa).

NAD(+) is bound by residues 41–45, 90–91, and Glu130; these read DAEYD and SL. Lys132 functions as the N6-AMP-lysine intermediate in the catalytic mechanism. NAD(+)-binding residues include Arg153, Glu190, Lys307, and Lys331. 4 residues coordinate Zn(2+): Cys425, Cys428, Cys443, and Cys449. The 82-residue stretch at 610–691 folds into the BRCT domain; that stretch reads APQGVLAGKT…LHQLLEGNTR (82 aa).

Belongs to the NAD-dependent DNA ligase family. LigA subfamily. Mg(2+) serves as cofactor. Requires Mn(2+) as cofactor.

It carries out the reaction NAD(+) + (deoxyribonucleotide)n-3'-hydroxyl + 5'-phospho-(deoxyribonucleotide)m = (deoxyribonucleotide)n+m + AMP + beta-nicotinamide D-nucleotide.. In terms of biological role, DNA ligase that catalyzes the formation of phosphodiester linkages between 5'-phosphoryl and 3'-hydroxyl groups in double-stranded DNA using NAD as a coenzyme and as the energy source for the reaction. It is essential for DNA replication and repair of damaged DNA. The sequence is that of DNA ligase from Burkholderia multivorans (strain ATCC 17616 / 249).